Here is a 245-residue protein sequence, read N- to C-terminus: uncharacterized protein (245 aa).

An N-terminal signal peptide occupies residues 1 to 19; the sequence is MKLTQFISYAILSLSGVQA.

The protein localises to the secreted. This is an uncharacterized protein from Arthroderma benhamiae (strain ATCC MYA-4681 / CBS 112371) (Trichophyton mentagrophytes).